The sequence spans 52 residues: MEKTQQQLIHEIEHIRKFLIDLGEDYPLHSHIVVSCSQKLDLLLNEFERTKE.

This is an uncharacterized protein from Halalkalibacterium halodurans (strain ATCC BAA-125 / DSM 18197 / FERM 7344 / JCM 9153 / C-125) (Bacillus halodurans).